The following is a 60-amino-acid chain: Ixodegrin-like peptide (60 aa).

A signal peptide spans 1 to 19 (MNAVFIAALLILGTSTFDA). The Cell attachment site motif lies at 49 to 51 (RGD).

The protein belongs to the ixodegrin family. Post-translationally, contains 3 disulfide bonds. In terms of tissue distribution, expressed in salivary glands.

Its subcellular location is the secreted. Its function is as follows. Tick salivary platelet aggregation inhibitor that plays an important part in the anti-hemostatic strategy of ticks. Inhibits platelet aggregation induced by ADP, thrombin and thromboxane A2 (TXA2). Blocks platelet adhesion to soluble collagen (most probably through the binding to alpha-2/beta-1 integrin (ITGA2/ITGB1)) and binds to purified glycoprotein IIb/IIIa (ITGA2B/ITGB3) in a dose-dependent manner. In vivo, reduces thrombus weight effectively in a rat arteriovenous shunt model and inhibits thrombosis in a carrageenan-induced mouse tail thrombosis model. This Ixodes scapularis (Black-legged tick) protein is Ixodegrin-like peptide.